The primary structure comprises 245 residues: Eukaryotic translation initiation factor 6 (245 aa).

Tyr113 carries the phosphotyrosine modification. Residue Thr165 is modified to Phosphothreonine. Ser166 carries the phosphoserine modification. Phosphoserine; by CK1 is present on residues Ser174 and Ser175. Ser235 carries the phosphoserine; by PKC modification. 2 positions are modified to phosphoserine: Ser239 and Ser243.

It belongs to the eIF-6 family. Monomer. Associates with the 60S ribosomal subunit. Interacts with RACK1. Interacts with DICER1, AGO2, TARBP2, MOV10 and RPL7A; they form a large RNA-induced silencing complex (RISC). Phosphorylation at Ser-174 and Ser-175 by CSNK1D/CK1 promotes nuclear export. In terms of processing, ufmylated by UFL1.

The protein resides in the cytoplasm. Its subcellular location is the nucleus. The protein localises to the nucleolus. In terms of biological role, binds to the 60S ribosomal subunit and prevents its association with the 40S ribosomal subunit to form the 80S initiation complex in the cytoplasm. Behaves as a stimulatory translation initiation factor downstream insulin/growth factors. Is also involved in ribosome biogenesis. Associates with pre-60S subunits in the nucleus and is involved in its nuclear export. Cytoplasmic release of TIF6 from 60S subunits and nuclear relocalization is promoted by a RACK1 (RACK1)-dependent protein kinase C activity. In tissues responsive to insulin, controls fatty acid synthesis and glycolysis by exerting translational control of adipogenic transcription factors such as CEBPB, CEBPD and ATF4 that have G/C rich or uORF in their 5'UTR. Required for ROS-dependent megakaryocyte maturation and platelets formation, controls the expression of mitochondrial respiratory chain genes involved in reactive oxygen species (ROS) synthesis. Involved in miRNA-mediated gene silencing by the RNA-induced silencing complex (RISC). Required for both miRNA-mediated translational repression and miRNA-mediated cleavage of complementary mRNAs by RISC. Modulates cell cycle progression and global translation of pre-B cells, its activation seems to be rate-limiting in tumorigenesis and tumor growth. In Bos taurus (Bovine), this protein is Eukaryotic translation initiation factor 6.